The chain runs to 512 residues: MSNILILDFGSQYTNVLAKKIRLLSVFCEVLTWNTPLEKILQISPSGLIFSGGPHSVYQENSPKVDKEIYNSNIPILGVCYGMQLIARDFGSEVQGGKSEFGYTPIVFYPSELFKGLVDQDAFHTEIRMSHCDSVVIPPKDFFVIASSQHCPIAAIECPEKKLFGLQFHPEVSDSQAVGDKILSNFVKHICQASETWKIETIEKQLIQSIKEKVGETERVLLGLSGGVDSSVLAVLLHNALGDRLSCVFVDTGLLRKNEVEEVKQQFSSLGLEILVVDASEKFFHDLSGIEDPEQKRKVIGAAFIEVFDEVSRNLDVQWLAQGTIYSDVIESAKSCDATQVIKSHHNVGGLPEKLNLKLLEPLRFLFKDEVRALGKVLGLPDVLISRHPFPGPGLGVRVLGEVRREYVEIVKNADSIFIEELKKANLYHKVSQAFAVFLPCKSVAVKGDCRHYGYTIALRAIESTDFMTACWPSLSREFLNRCSSRIINEIPEVCRVVYDISDKPPATIEWE.

Residues 3 to 196 enclose the Glutamine amidotransferase type-1 domain; that stretch reads NILILDFGSQ…VKHICQASET (194 aa). The active-site Nucleophile is Cys-80. Catalysis depends on residues His-169 and Glu-171. Residues 197–387 enclose the GMPS ATP-PPase domain; the sequence is WKIETIEKQL…LGLPDVLISR (191 aa). 225–231 is an ATP binding site; it reads SGGVDSS.

Homodimer.

It carries out the reaction XMP + L-glutamine + ATP + H2O = GMP + L-glutamate + AMP + diphosphate + 2 H(+). The protein operates within purine metabolism; GMP biosynthesis; GMP from XMP (L-Gln route): step 1/1. Its function is as follows. Catalyzes the synthesis of GMP from XMP. In Chlamydia caviae (strain ATCC VR-813 / DSM 19441 / 03DC25 / GPIC) (Chlamydophila caviae), this protein is GMP synthase [glutamine-hydrolyzing].